The following is a 491-amino-acid chain: Cytochrome P450 81F2 (491 aa).

The chain crosses the membrane as a helical span at residues 283–303 (VIIKGLMLSMMLAGTDTAAVT). Cys429 contributes to the heme binding site.

It belongs to the cytochrome P450 family. Heme is required as a cofactor.

It localises to the membrane. It functions in the pathway secondary metabolite biosynthesis. In terms of biological role, involved in indole glucosinolate biosynthesis. Catalyzes hydroxylation reactions of the glucosinolate indole ring. Converts indol-3-yl-methylglucosinolate (I3M) to 4-hydroxy-indol-3-yl-methylglucosinolate (4OH-I3M) and/or 1-hydroxy-indol-3-yl-methylglucosinolate (1OH-I3M) intermediates. These hydroxy intermediates are converted to 4-methoxy-indol-3-yl-methylglucosinolate (4MO-I3M) and 1-methoxy-indol-3-yl-methylglucosinolate (1MO-I3M) by indole glucosinolate methyltransferase 1 and 2 (IGMT1 and IGMT2). Contributes to defense against the green peach aphid (Myzus persicae), a generalist phloem-feeding herbivore. Required for the biosynthesis of antifungal indole glucosinolate metabolites. Required for the pathogen-induced accumulation of 4MO-I3M, which in turn is activated by the atypical BGLU26/PEN2 myrosinase. Required for the biosynthesis of Trp-derived antifungal compounds and non-host resistance to the necrotrophic fungal pathogen Plectosphaerella cucumerina. Required for resistance to the non-adapted fungal pathogen Colletotrichum gloeosporioides. The polypeptide is Cytochrome P450 81F2 (Arabidopsis thaliana (Mouse-ear cress)).